We begin with the raw amino-acid sequence, 38 residues long: Photosystem II reaction center protein L (38 aa).

Residues S17–F37 traverse the membrane as a helical segment.

The protein belongs to the PsbL family. PSII is composed of 1 copy each of membrane proteins PsbA, PsbB, PsbC, PsbD, PsbE, PsbF, PsbH, PsbI, PsbJ, PsbK, PsbL, PsbM, PsbT, PsbX, PsbY, PsbZ, Psb30/Ycf12, at least 3 peripheral proteins of the oxygen-evolving complex and a large number of cofactors. It forms dimeric complexes.

The protein resides in the plastid. Its subcellular location is the chloroplast thylakoid membrane. One of the components of the core complex of photosystem II (PSII). PSII is a light-driven water:plastoquinone oxidoreductase that uses light energy to abstract electrons from H(2)O, generating O(2) and a proton gradient subsequently used for ATP formation. It consists of a core antenna complex that captures photons, and an electron transfer chain that converts photonic excitation into a charge separation. This subunit is found at the monomer-monomer interface and is required for correct PSII assembly and/or dimerization. In Chlorokybus atmophyticus (Soil alga), this protein is Photosystem II reaction center protein L.